A 574-amino-acid polypeptide reads, in one-letter code: Proline--tRNA ligase (574 aa).

The protein belongs to the class-II aminoacyl-tRNA synthetase family. ProS type 1 subfamily. Homodimer.

It is found in the cytoplasm. It carries out the reaction tRNA(Pro) + L-proline + ATP = L-prolyl-tRNA(Pro) + AMP + diphosphate. Functionally, catalyzes the attachment of proline to tRNA(Pro) in a two-step reaction: proline is first activated by ATP to form Pro-AMP and then transferred to the acceptor end of tRNA(Pro). As ProRS can inadvertently accommodate and process non-cognate amino acids such as alanine and cysteine, to avoid such errors it has two additional distinct editing activities against alanine. One activity is designated as 'pretransfer' editing and involves the tRNA(Pro)-independent hydrolysis of activated Ala-AMP. The other activity is designated 'posttransfer' editing and involves deacylation of mischarged Ala-tRNA(Pro). The misacylated Cys-tRNA(Pro) is not edited by ProRS. The polypeptide is Proline--tRNA ligase (Sodalis glossinidius (strain morsitans)).